Here is a 293-residue protein sequence, read N- to C-terminus: Shikimate dehydrogenase (NADP(+)) (293 aa).

Shikimate contacts are provided by residues 26–28 (SKS) and Thr-73. Lys-77 (proton acceptor) is an active-site residue. An NADP(+)-binding site is contributed by Glu-89. Shikimate contacts are provided by Asn-98 and Asp-113. NADP(+)-binding positions include 137 to 141 (GAGGA), 161 to 166 (NRTRQR), and Ile-231. Tyr-233 serves as a coordination point for shikimate. Gly-254 lines the NADP(+) pocket.

It belongs to the shikimate dehydrogenase family. Homodimer.

The enzyme catalyses shikimate + NADP(+) = 3-dehydroshikimate + NADPH + H(+). Its pathway is metabolic intermediate biosynthesis; chorismate biosynthesis; chorismate from D-erythrose 4-phosphate and phosphoenolpyruvate: step 4/7. Its function is as follows. Involved in the biosynthesis of the chorismate, which leads to the biosynthesis of aromatic amino acids. Catalyzes the reversible NADPH linked reduction of 3-dehydroshikimate (DHSA) to yield shikimate (SA). This is Shikimate dehydrogenase (NADP(+)) from Bartonella quintana (strain Toulouse) (Rochalimaea quintana).